The chain runs to 505 residues: Probable inorganic carbon transporter subunit DabB (505 aa).

13 helical membrane-spanning segments follow: residues 9-29, 37-57, 68-88, 105-123, 162-182, 204-224, 231-251, 259-279, 303-323, 355-375, 382-402, 410-430, and 446-466; these read SLLT…LLFL, FVRI…LILA, WHLD…GFII, YFTL…WLSG, LFLL…HATG, TGIQ…WPFQ, IVAP…AGGI, LFHG…SVLI, GFML…HLIL, LWVM…WLTA, LISA…LVAF, IAGL…HHLF, and MSAV…GTWV.

The protein belongs to the inorganic carbon transporter (TC 9.A.2) DabB family. As to quaternary structure, forms a complex with DabA.

The protein resides in the cell membrane. Part of an energy-coupled inorganic carbon pump. The polypeptide is Probable inorganic carbon transporter subunit DabB (Bacillus subtilis (strain 168)).